The chain runs to 241 residues: Carboxy-S-adenosyl-L-methionine synthase (241 aa).

S-adenosyl-L-methionine-binding positions include Tyr38, 63 to 65 (GCS), 88 to 89 (DN), 116 to 117 (DI), Asn131, and Arg198.

This sequence belongs to the class I-like SAM-binding methyltransferase superfamily. Cx-SAM synthase family. As to quaternary structure, homodimer.

The catalysed reaction is prephenate + S-adenosyl-L-methionine = carboxy-S-adenosyl-L-methionine + 3-phenylpyruvate + H2O. Its function is as follows. Catalyzes the conversion of S-adenosyl-L-methionine (SAM) to carboxy-S-adenosyl-L-methionine (Cx-SAM). In Actinobacillus pleuropneumoniae serotype 5b (strain L20), this protein is Carboxy-S-adenosyl-L-methionine synthase.